The sequence spans 243 residues: Arginine transport ATP-binding protein ArtP (243 aa).

In terms of domain architecture, ABC transporter spans 3 to 242 (IRVKNLNFFY…KTEQFKHYLS (240 aa)). 35–42 (GPSGAGKS) serves as a coordination point for ATP.

Belongs to the ABC transporter superfamily. The complex is composed of two ATP-binding proteins (ArtP), two transmembrane proteins (ArtM and ArtQ) and a solute-binding protein (ArtI).

It is found in the cell inner membrane. It catalyses the reaction a polar amino acid(out) + ATP + H2O = a polar amino acid(in) + ADP + phosphate + H(+). The enzyme catalyses L-arginine(out) + ATP + H2O = L-arginine(in) + ADP + phosphate + H(+). In terms of biological role, part of the ABC transporter complex ArtPIQM involved in arginine transport. Probably responsible for energy coupling to the transport system. This Haemophilus influenzae (strain ATCC 51907 / DSM 11121 / KW20 / Rd) protein is Arginine transport ATP-binding protein ArtP (artP).